A 102-amino-acid chain; its full sequence is Large ribosomal subunit protein P1 (102 aa).

The disordered stretch occupies residues 69 to 91 (APAAAAEEKKEEEKKEEKKEEDT). Basic and acidic residues predominate over residues 74 to 90 (AEEKKEEEKKEEKKEED).

This sequence belongs to the eukaryotic ribosomal protein P1/P2 family. As to quaternary structure, part of the 50S ribosomal subunit. Homodimer, it forms part of the ribosomal stalk which helps the ribosome interact with GTP-bound translation factors. Forms a heptameric uL10/P0(P1)2(P1)2(P1)2 complex, where uL10/P0 forms an elongated spine to which the P1 dimers bind in a sequential fashion.

Its function is as follows. Forms part of the ribosomal stalk, playing a central role in the interaction of the ribosome with GTP-bound translation factors. The polypeptide is Large ribosomal subunit protein P1 (Methanocaldococcus jannaschii (strain ATCC 43067 / DSM 2661 / JAL-1 / JCM 10045 / NBRC 100440) (Methanococcus jannaschii)).